The sequence spans 182 residues: uncharacterized protein (182 aa).

Residues 1-177 (MEFSVGGVEV…KFLEVFKKHL (177 aa)) form the Macro domain.

This is an uncharacterized protein from Pyrobaculum aerophilum (strain ATCC 51768 / DSM 7523 / JCM 9630 / CIP 104966 / NBRC 100827 / IM2).